Here is a 489-residue protein sequence, read N- to C-terminus: Dipeptide and tripeptide permease B (489 aa).

At 1–27 the chain is on the cytoplasmic side; the sequence is MNTTTPMGMLQQPRPFFMIFFVELWER. Residues 28–48 form a helical membrane-spanning segment; it reads FGYYGVQGVLAVFFVKQLGFS. At 49–52 the chain is on the periplasmic side; sequence QEQA. The chain crosses the membrane as a helical span at residues 53–73; sequence FVTFGAFAALVYGLISIGGYV. The Cytoplasmic segment spans residues 74-82; the sequence is GDHLLGTKR. A helical transmembrane segment spans residues 83–103; it reads TIVLGALVLAIGYFMTGLSLL. Topologically, residues 104 to 106 are periplasmic; it reads KPD. Residues 107 to 127 form a helical membrane-spanning segment; the sequence is LIFIALGTIAVGNGLFKANPA. Residues 128-146 lie on the Cytoplasmic side of the membrane; the sequence is SLLSKCYPPKAPRLDGAFT. The chain crosses the membrane as a helical span at residues 147–167; the sequence is LFYMSINIGSLIALSLAPVIA. The Periplasmic portion of the chain corresponds to 168-172; that stretch reads DRFGY. The helical transmembrane segment at 173–193 threads the bilayer; sequence SVTYNLCGAGLIIALLVYIAC. At 194–210 the chain is on the cytoplasmic side; sequence RGMVKDIGSEPDFRPMS. Residues 211–231 form a helical membrane-spanning segment; it reads FSKLLYVLLGSVVMIFVCAWL. The Periplasmic segment spans residues 232–233; sequence MH. A helical transmembrane segment spans residues 234-254; that stretch reads NVEVANLVLIVLSIVVTIIFF. The Cytoplasmic segment spans residues 255 to 267; the sequence is RQAFKLDKTGRNK. The chain crosses the membrane as a helical span at residues 268–288; it reads MFVAFVLMLEAVVFYILYAQM. At 289-311 the chain is on the periplasmic side; that stretch reads PTSLNFFAINNVHHEILGFSINP. A helical transmembrane segment spans residues 312 to 332; that stretch reads VSFQALNPFWVVLASPILAGI. The Cytoplasmic portion of the chain corresponds to 333–350; that stretch reads YTHLGSKGKDLSMPMKFT. A helical transmembrane segment spans residues 351-371; the sequence is LGMFMCSLGFLTAAAAGMWFA. At 372–380 the chain is on the periplasmic side; it reads DAQGLTSPW. The chain crosses the membrane as a helical span at residues 381–401; sequence FIVLVYLFQSLGELFISALGL. The Cytoplasmic portion of the chain corresponds to 402 to 411; that stretch reads AMVAALVPQH. Residues 412–432 form a helical membrane-spanning segment; it reads LMGFILGISFLTQAAAFLLGG. Residues 433–456 lie on the Periplasmic side of the membrane; the sequence is YVATFTAVPDNITDPLETLPVYTN. A helical transmembrane segment spans residues 457–477; the sequence is VFGKIGLVTLGVAVVMLLMVP. At 478 to 489 the chain is on the cytoplasmic side; that stretch reads WLKRMIAAPESH.

The protein belongs to the major facilitator superfamily. Proton-dependent oligopeptide transporter (POT/PTR) (TC 2.A.17) family. DtpB subfamily.

The protein localises to the cell inner membrane. Functionally, proton-dependent permease that transports di- and tripeptides. The protein is Dipeptide and tripeptide permease B of Shigella dysenteriae serotype 1 (strain Sd197).